We begin with the raw amino-acid sequence, 49 residues long: SPbeta prophage-derived uncharacterized protein YorN (49 aa).

The chain is SPbeta prophage-derived uncharacterized protein YorN (yorN) from Bacillus subtilis (strain 168).